Here is a 147-residue protein sequence, read N- to C-terminus: Chorion class B protein B.L1 (147 aa).

A left arm region spans residues isoleucine 1 to phenylalanine 38. 4 tandem repeats follow at residues glycine 11 to leucine 15, glycine 16 to leucine 20, glycine 21 to leucine 25, and glycine 26 to leucine 30. The segment at glycine 11–leucine 30 is 4 X 5 AA tandem repeats of G-Y-G-G-L. The segment at serine 39–glutamate 107 is central domain. The tract at residues glycine 108–tyrosine 147 is right arm (Gly-rich tandem repeats).

Belongs to the chorion protein family.

In terms of biological role, this protein is one of many from the eggshell of the silk moth. This chain is Chorion class B protein B.L1, found in Bombyx mori (Silk moth).